Here is a 294-residue protein sequence, read N- to C-terminus: uncharacterized protein (294 aa).

The protein localises to the mitochondrion. This is an uncharacterized protein from Zea mays (Maize).